The following is a 1481-amino-acid chain: Cystic fibrosis transmembrane conductance regulator (1481 aa).

At 1-77 (MQRSPLEKAS…KLINALRRCF (77 aa)) the chain is on the cytoplasmic side. Residues 78 to 98 (FWRFMFYGIILYLGEVTKAVQ) traverse the membrane as a helical segment. An ABC transmembrane type-1 1 domain is found at 81–365 (FMFYGIILYL…WAVQTWYDSL (285 aa)). Topologically, residues 99–122 (PLLLGRIIASYDPDNKAERSIAIY) are extracellular. Residues 123–146 (LGIGLCLLFIVRTLLLHPAIFGLH) traverse the membrane as a helical segment. At 147 to 195 (HIGMQMRIAMFSLIYKKTLKLSSRVLDKISIGQLVSLLSNNLNKFDEGL) the chain is on the cytoplasmic side. Residues 196–216 (ALAHFVWIAPLQVTLLMGLLW) traverse the membrane as a helical segment. Over 217 to 222 (ELLQAF) the chain is Extracellular. Residues 223 to 243 (TFCGLAFLVVLAFLQAGLGKM) traverse the membrane as a helical segment. Residues 244–298 (MMKYRDQRAGKINERLVITSEIIENIQSVKAYCWEEAMEKIIENLRQTELKLTRK) are Cytoplasmic-facing. Residues 299 to 319 (AAYVRYLNSSAFFFSGFFVVF) form a helical membrane-spanning segment. The Extracellular portion of the chain corresponds to 320-339 (LSVLPYALLKGIILRKIFTT). A helical membrane pass occupies residues 340-358 (ISFCIVLRMAVTRQFPWAV). The Cytoplasmic segment spans residues 359-858 (QTWYDSLGAI…YLRYITVHKS (500 aa)). ATP contacts are provided by residues tryptophan 401, 457–464 (GSTGAGKT), and glutamine 492. The region spanning 423–645 (NGDNNLFFSN…RPDFSSKLMG (223 aa)) is the ABC transporter 1 domain. A lipid anchor (S-palmitoyl cysteine) is attached at cysteine 523. Serine 548 and serine 659 each carry phosphoserine. The disordered R region stretch occupies residues 653-831 (TAERRNSIIT…EEINEEDLRD (179 aa)). Position 669 is a phosphoserine; by PKA (serine 669). Position 685 is a phosphoserine (serine 685). A Glycyl lysine isopeptide (Lys-Gly) (interchain with G-Cter in ubiquitin) cross-link involves residue lysine 687. Serine 699 and serine 711 each carry phosphoserine. Residue threonine 716 is modified to Phosphothreonine. Serine 736, serine 767, serine 790, serine 795, and serine 813 each carry phosphoserine. The helical transmembrane segment at 859–879 (LMFVLIWCLVVFLAEVAASLV) threads the bilayer. The ABC transmembrane type-1 2 domain maps to 859 to 1155 (LMFVLIWCLV…AVNSSIDVDS (297 aa)). Residues 880–918 (VLCLFPKILFQDKGNSTKSANNSYAVIITSTSSYYIFYI) are Extracellular-facing. Residues asparagine 894 and asparagine 900 are each glycosylated (N-linked (GlcNAc...) asparagine). A discontinuously helical transmembrane segment spans residues 919 to 939 (YVGVADTLLALGLFRGLPLVH). At 940-990 (TLITVSKTLHHKMLQSVLQAPMSTLNTLKTGGILNRFSKDIAVLDDLLPLT) the chain is on the cytoplasmic side. Residues 991–1011 (IFDFVQLLLIVIGAVVVVSVL) form a helical membrane-spanning segment. Residues 1012–1013 (QP) are Extracellular-facing. A helical membrane pass occupies residues 1014–1034 (YIFLATVPVIAAFILLRAYFL). Residues 1035–1095 (HTSQQLKQLE…TANWFLYLST (61 aa)) lie on the Cytoplasmic side of the membrane. The chain crosses the membrane as a helical span at residues 1096 to 1116 (LRWFQMRIEMIFVIFFIAVTF). Residues 1117–1130 (ISILTTGEGEGRVG) are Extracellular-facing. The chain crosses the membrane as a helical span at residues 1131–1151 (IILTLAMNIMGTLQWAVNSSI). Topologically, residues 1152–1481 (DVDSLMRSVS…TEEEVQETKI (330 aa)) are cytoplasmic. Positions 1211–1444 (MTVKDLTAKY…KSLFRQAISP (234 aa)) constitute an ABC transporter 2 domain. ATP-binding positions include tyrosine 1220 and 1245–1252 (GRTGSGKS). An interaction with GORASP2 region spans residues 1387–1481 (RTLKQAFADC…TEEEVQETKI (95 aa)). Cysteine 1396 is lipidated: S-palmitoyl cysteine. A disordered region spans residues 1452–1481 (PQRNSSRQKSRSNIAALKEETEEEVQETKI). The span at 1453 to 1464 (QRNSSRQKSRSN) shows a compositional bias: low complexity. Phosphoserine is present on serine 1457. Over residues 1471–1481 (ETEEEVQETKI) the composition is skewed to acidic residues. The short motif at 1479–1481 (TKI) is the PDZ-binding element.

Belongs to the ABC transporter superfamily. ABCC family. CFTR transporter (TC 3.A.1.202) subfamily. Monomer; does not require oligomerization for channel activity. May form oligomers in the membrane. Interacts with SLC26A3, SLC26A6 and NHERF1. Interacts with SHANK2. Interacts with MYO6. Interacts (via C-terminus) with GOPC (via PDZ domain); this promotes CFTR internalization and thereby decreases channel activity. Interacts with SLC4A7 through NHERF1. Found in a complex with MYO5B and RAB11A. Interacts with ANO1. Interacts with SLC26A8. Interacts with AHCYL1; the interaction increases CFTR activity. Interacts with CSE1L. The core-glycosylated form interacts with GORASP2 (via PDZ GRASP-type 1 domain) in respone to ER stress. Interacts with MARCHF2; the interaction leads to CFTR ubiqtuitination and degradation. Interacts with ADGRG2. N-glycosylated. Post-translationally, phosphorylated; cAMP treatment promotes phosphorylation and activates the channel. Dephosphorylation decreases the ATPase activity (in vitro). Phosphorylation at PKA sites activates the channel. Phosphorylation at PKC sites enhances the response to phosphorylation by PKA. Phosphorylated by AMPK; this inhibits channel activity. In terms of processing, ubiquitinated, leading to its degradation in the lysosome. Deubiquitination by USP10 in early endosomes enhances its endocytic recycling to the cell membrane. Ubiquitinated by RNF185 during ER stress. Ubiquitinated by MARCHF2.

It localises to the apical cell membrane. The protein resides in the early endosome membrane. The protein localises to the cell membrane. It is found in the recycling endosome membrane. Its subcellular location is the endoplasmic reticulum membrane. It localises to the nucleus. It catalyses the reaction ATP + H2O + closed Cl(-) channel = ADP + phosphate + open Cl(-) channel.. The catalysed reaction is chloride(in) = chloride(out). The enzyme catalyses hydrogencarbonate(in) = hydrogencarbonate(out). It carries out the reaction ATP + H2O = ADP + phosphate + H(+). Epithelial ion channel that plays an important role in the regulation of epithelial ion and water transport and fluid homeostasis. Mediates the transport of chloride ions across the cell membrane. Possesses an intrinsic ATPase activity and utilizes ATP to gate its channel; the passive flow of anions through the channel is gated by cycles of ATP binding and hydrolysis by the ATP-binding domains. The ion channel is also permeable to HCO(3)(-); selectivity depends on the extracellular chloride concentration. Exerts its function also by modulating the activity of other ion channels and transporters. Contributes to the regulation of the pH and the ion content of the epithelial fluid layer. Modulates the activity of the epithelial sodium channel (ENaC) complex, in part by regulating the cell surface expression of the ENaC complex. May regulate bicarbonate secretion and salvage in epithelial cells by regulating the transporter SLC4A7. Can inhibit the chloride channel activity of ANO1. Plays a role in the chloride and bicarbonate homeostasis during sperm epididymal maturation and capacitation. The protein is Cystic fibrosis transmembrane conductance regulator of Muntiacus reevesi (Reeves' muntjac).